A 909-amino-acid chain; its full sequence is MSTKVKKCREPARVTLPAPEEEDGEAEGAEPQRRRRGWRGVNGGLEPPCPRAPPSPGPDASSEGSPSRWRTAGMRDKGRRQAVRGPAFMFGARGPSLTAEEERFLDAAEYGNIPVVRKMLEESRTLNVNCVDYMGQNALQLAVGNEHLEVTELLLKKENLARIGDALLLAISKGYVRIVEAILGHPGFAASRRLTLSPCEQELRDDDFYAYDEDGTRFSPDITPIILAAHCHKYEVVHLLLLKGARIERPHDYFCRCADCAEKQRLDAFSHSRSRINAYKGLASPAYLSLSSEDPVLTALELSNELAKLANIEKEFKNDYRKLSMQCKDFVVGVLDLCRDSEEVEAILNGDLESVEPLERHGHKASLSRVKLAIKYEVKKFVAHPNCQQQLLTIWYENLSGLREQTIAIKCLVVLVVALGLPFLAIGYWIAPCSRLGKILRSPFMKFVAHAASFIIFLGLLVFNASDRFEGITTLPNITVIDYPKQIFRVKTTQFTWTEMLIMVWVLGMMWSECKELWLEGPREYIVQLWNVLDFGMLSIFIAAFTARFLAFLQATKAQQYVDSHVQESDLSEVTLPPEVQYFTYARDKWLPSDPQIISEGLYAIAVVLSFSRIAYILPANESFGPLQISLGRTVKDIFKFMVLFIMVFLAFMIGMFILYSYYLGAKVNPAFTTVEESFKTLFWSIFGLSEVTSVVLKYDHKFIENIGYVLYGIYNVTMVVVLLNMLIAMINSSYQEIEDDSDVEWKFARSKLWLSYFDDGKTLPPPFSLVPSPKSFVYFIMRITNFSKCRRRRLQKDLELGMGNSKSRLNLFTQSNSRVFESHSFNSILNQPTRYQQIMKRLIKRYVLKAQVDKENDEVNEGELKEIKQDISSLRYELLEDKSQATEELAILIHKLSEKLNPSALRCE.

Positions methionine 1–alanine 92 are disordered. The Cytoplasmic segment spans residues methionine 1–phenylalanine 447. Acidic residues predominate over residues proline 19–glycine 28. The span at proline 47 to glycine 57 shows a compositional bias: pro residues. Over residues proline 58–serine 67 the composition is skewed to low complexity. 4 ANK repeats span residues alanine 99 to valine 128, methionine 134 to isoleucine 163, aspartate 165 to serine 191, and proline 220 to arginine 249. Residue glutamate 146 coordinates Ca(2+). A helical membrane pass occupies residues valine 448–alanine 465. Topologically, residues serine 466–threonine 496 are extracellular. N-linked (GlcNAc...) asparagine glycosylation occurs at asparagine 477. A helical transmembrane segment spans residues tryptophan 497–lysine 515. Ca(2+) contacts are provided by glutamate 513, glutamate 516, and asparagine 531. Over glutamate 516–glutamine 528 the chain is Cytoplasmic. A helical transmembrane segment spans residues leucine 529–leucine 550. The Extracellular segment spans residues alanine 551–aspartate 594. Residues proline 595–leucine 618 form a helical membrane-spanning segment. Over proline 619–aspartate 637 the chain is Cytoplasmic. The stretch at glutamate 622–alanine 651 is one ANK 5 repeat. The helical transmembrane segment at isoleucine 638 to serine 661 threads the bilayer. Residues tyrosine 662–histidine 701 lie on the Extracellular side of the membrane. A helical membrane pass occupies residues lysine 702–leucine 727. Residues isoleucine 728–glutamate 909 lie on the Cytoplasmic side of the membrane. 4 residues coordinate Ca(2+): glutamate 859, glutamate 862, glutamate 864, and aspartate 871.

It belongs to the transient receptor (TC 1.A.4) family. STrpC subfamily. TRPC3 sub-subfamily. Homotetramer. Interacts with ITPR1, ITPR3, MX1 and RNF24. Interacts with JPH2; the interaction is involved in maintaining Ca(2+) homeostasis in skeletal muscle and is mediated by JPH2 'Ser-165' phosphorylation.

The protein localises to the cell membrane. It carries out the reaction Ca(2+)(in) = Ca(2+)(out). Its activity is regulated as follows. Activated by diacylglycerol (DAG) in a membrane-delimited fashion, independently of protein kinase C. Activated by inositol 1,4,5-triphosphate receptors (ITPR) with bound IP3. May be activated by internal calcium store depletion. Inhibited by intracellular Ca(2+). Forms a receptor-activated non-selective calcium permeant cation channel. May be operated by a phosphatidylinositol second messenger system activated by receptor tyrosine kinases or G-protein coupled receptors. The sequence is that of Short transient receptor potential channel 3 (Trpc3) from Rattus norvegicus (Rat).